The following is a 180-amino-acid chain: uncharacterized protein (180 aa).

Residues 1–30 form the signal peptide; the sequence is MRHKIITFILAVVVIIIIGNMIGGGGGSEA. The disordered stretch occupies residues 25–46; it reads GGGSEATSKTSSSSKAETEKTY. The span at 29 to 39 shows a compositional bias: low complexity; sequence EATSKTSSSSK.

The protein resides in the secreted. This is an uncharacterized protein from Bacillus subtilis (strain 168).